A 351-amino-acid polypeptide reads, in one-letter code: Putative phospho-N-acetylmuramoyl-pentapeptide-transferase (351 aa).

10 helical membrane-spanning segments follow: residues 2-22 (MEFL…TLFI), 44-64 (AGTP…VTVL), 71-91 (LVLT…DDLL), 158-178 (GEKI…GAVG), 181-201 (GGFY…VGAI), 212-232 (GMAA…LGLS), 235-255 (ALPF…NRHP), 258-278 (IFMG…AVML), 281-301 (TVYF…VSLL), and 328-348 (IVLL…YMTG).

It belongs to the glycosyltransferase 4 family. MraY subfamily. Requires Mg(2+) as cofactor.

It is found in the cell membrane. The catalysed reaction is UDP-N-acetyl-alpha-D-muramoyl-L-alanyl-gamma-D-glutamyl-meso-2,6-diaminopimeloyl-D-alanyl-D-alanine + di-trans,octa-cis-undecaprenyl phosphate = di-trans,octa-cis-undecaprenyl diphospho-N-acetyl-alpha-D-muramoyl-L-alanyl-D-glutamyl-meso-2,6-diaminopimeloyl-D-alanyl-D-alanine + UMP. The protein is Putative phospho-N-acetylmuramoyl-pentapeptide-transferase of Methanothermobacter thermautotrophicus (strain ATCC 29096 / DSM 1053 / JCM 10044 / NBRC 100330 / Delta H) (Methanobacterium thermoautotrophicum).